A 486-amino-acid chain; its full sequence is Glutamate--tRNA ligase (486 aa).

The 'HIGH' region signature appears at 12-22; the sequence is PSPTGTPHVGL. The short motif at 256 to 260 is the 'KMSKS' region element; the sequence is KLSKR. Residue Lys-259 participates in ATP binding.

It belongs to the class-I aminoacyl-tRNA synthetase family. Glutamate--tRNA ligase type 1 subfamily. Monomer.

The protein resides in the cytoplasm. It carries out the reaction tRNA(Glu) + L-glutamate + ATP = L-glutamyl-tRNA(Glu) + AMP + diphosphate. In terms of biological role, catalyzes the attachment of glutamate to tRNA(Glu) in a two-step reaction: glutamate is first activated by ATP to form Glu-AMP and then transferred to the acceptor end of tRNA(Glu). This chain is Glutamate--tRNA ligase, found in Mycolicibacterium smegmatis (strain ATCC 700084 / mc(2)155) (Mycobacterium smegmatis).